Reading from the N-terminus, the 155-residue chain is Transcriptional repressor NrdR (155 aa).

A disordered region spans residues M1 to G22. Residues C3–C34 fold into a zinc finger. The span at G7–G22 shows a compositional bias: basic and acidic residues. The ATP-cone domain maps to I49–D139.

The protein belongs to the NrdR family. It depends on Zn(2+) as a cofactor.

In terms of biological role, negatively regulates transcription of bacterial ribonucleotide reductase nrd genes and operons by binding to NrdR-boxes. The sequence is that of Transcriptional repressor NrdR from Phenylobacterium zucineum (strain HLK1).